Here is a 417-residue protein sequence, read N- to C-terminus: Gamma-glutamyl phosphate reductase (417 aa).

Belongs to the gamma-glutamyl phosphate reductase family.

The protein localises to the cytoplasm. It carries out the reaction L-glutamate 5-semialdehyde + phosphate + NADP(+) = L-glutamyl 5-phosphate + NADPH + H(+). It functions in the pathway amino-acid biosynthesis; L-proline biosynthesis; L-glutamate 5-semialdehyde from L-glutamate: step 2/2. In terms of biological role, catalyzes the NADPH-dependent reduction of L-glutamate 5-phosphate into L-glutamate 5-semialdehyde and phosphate. The product spontaneously undergoes cyclization to form 1-pyrroline-5-carboxylate. The polypeptide is Gamma-glutamyl phosphate reductase (Sodalis glossinidius (strain morsitans)).